Consider the following 723-residue polypeptide: E3 ubiquitin-protein ligase LRSAM1 (723 aa).

LRR repeat units lie at residues 30–51 (ADDILDISKCELSEIPFGAFAT), 56–77 (QKKVLIVHTNHLTSLLPKSCSL), 82–103 (TIKVLDLHDNQLTALPDDLGQL), 105–127 (ALQVLNVERNQLMQLPRSIGNLT), 128–149 (QLQTLNVKDNKLKELPDTVGEL), and 151–172 (SLRTLNISGNEIQRLPQMLAHV). Ser234 bears the Phosphoserine mark. Coiled coils occupy residues 254 to 380 (SDYE…TESL) and 510 to 562 (ALSS…KPLS). A disordered region spans residues 282 to 314 (TQLLQQSSSQKDEILQTVKEEQSRLEQGLSEHQ). Basic and acidic residues predominate over residues 291 to 314 (QKDEILQTVKEEQSRLEQGLSEHQ). Residues 569-632 (GMERQLVALL…LRRVQELLDA (64 aa)) enclose the SAM domain. Residue Ser604 is modified to Phosphoserine. Positions 642–665 (PMGEVVTPTAPQEPPESVRPSAPP) are disordered. 2 short sequence motifs (PTAP motif) span residues 649-652 (PTAP) and 661-664 (PSAP). An RING-type zinc finger spans residues 675-710 (CVVCLEREAQMIFLNCGHVCCCQQCCQPLRTCPLCR).

As to quaternary structure, interacts with TSG101. Interacts with PHF23. Interacts with FUS. Ubiquitination promoted by PHF23 leads to proteasomal degradation. Highly expressed in adult spinal cord motoneurons as well as in fetal spinal cord and muscle tissue.

It localises to the cytoplasm. It carries out the reaction S-ubiquitinyl-[E2 ubiquitin-conjugating enzyme]-L-cysteine + [acceptor protein]-L-lysine = [E2 ubiquitin-conjugating enzyme]-L-cysteine + N(6)-ubiquitinyl-[acceptor protein]-L-lysine.. It functions in the pathway protein modification; protein ubiquitination. E3 ubiquitin-protein ligase that mediates monoubiquitination of TSG101 at multiple sites, leading to inactivate the ability of TSG101 to sort endocytic (EGF receptors) and exocytic (HIV-1 viral proteins) cargos. Bacterial recognition protein that defends the cytoplasm from invasive pathogens. Localizes to several intracellular bacterial pathogens and generates the bacteria-associated ubiquitin signal leading to autophagy-mediated intracellular bacteria degradation (xenophagy). This Homo sapiens (Human) protein is E3 ubiquitin-protein ligase LRSAM1.